The primary structure comprises 286 residues: Formamidopyrimidine-DNA glycosylase (286 aa).

Proline 2 (schiff-base intermediate with DNA) is an active-site residue. The Proton donor role is filled by glutamate 3. Residue lysine 61 is the Proton donor; for beta-elimination activity of the active site. DNA contacts are provided by histidine 96, arginine 117, and lysine 160. An FPG-type zinc finger spans residues 246–280; that stretch reads DAYGREGLPCRRCATPMRRRPWMNRSSYFCPKCQR. The active-site Proton donor; for delta-elimination activity is arginine 270.

The protein belongs to the FPG family. As to quaternary structure, monomer. Requires Zn(2+) as cofactor.

The catalysed reaction is Hydrolysis of DNA containing ring-opened 7-methylguanine residues, releasing 2,6-diamino-4-hydroxy-5-(N-methyl)formamidopyrimidine.. It carries out the reaction 2'-deoxyribonucleotide-(2'-deoxyribose 5'-phosphate)-2'-deoxyribonucleotide-DNA = a 3'-end 2'-deoxyribonucleotide-(2,3-dehydro-2,3-deoxyribose 5'-phosphate)-DNA + a 5'-end 5'-phospho-2'-deoxyribonucleoside-DNA + H(+). Involved in base excision repair of DNA damaged by oxidation or by mutagenic agents. Acts as a DNA glycosylase that recognizes and removes damaged bases. Has a preference for oxidized purines, such as 7,8-dihydro-8-oxoguanine (8-oxoG). Has AP (apurinic/apyrimidinic) lyase activity and introduces nicks in the DNA strand. Cleaves the DNA backbone by beta-delta elimination to generate a single-strand break at the site of the removed base with both 3'- and 5'-phosphates. The polypeptide is Formamidopyrimidine-DNA glycosylase (Streptomyces avermitilis (strain ATCC 31267 / DSM 46492 / JCM 5070 / NBRC 14893 / NCIMB 12804 / NRRL 8165 / MA-4680)).